A 101-amino-acid polypeptide reads, in one-letter code: Guanyl-specific ribonuclease St (101 aa).

A disulfide bridge connects residues Cys4 and Cys54. The active-site Proton acceptor is Glu61. The active-site Proton donor is the His91.

The protein belongs to the ribonuclease N1/T1 family.

It carries out the reaction [RNA] containing guanosine + H2O = an [RNA fragment]-3'-guanosine-3'-phosphate + a 5'-hydroxy-ribonucleotide-3'-[RNA fragment].. The protein is Guanyl-specific ribonuclease St of Saccharopolyspora erythraea (Streptomyces erythraeus).